Here is an 815-residue protein sequence, read N- to C-terminus: Leucine--tRNA ligase (815 aa).

Positions 41–51 match the 'HIGH' region motif; sequence PYPSGTLHVGH. Residues 576–580 carry the 'KMSKS' region motif; sequence KMSKS. Residue Lys579 coordinates ATP.

It belongs to the class-I aminoacyl-tRNA synthetase family.

Its subcellular location is the cytoplasm. The catalysed reaction is tRNA(Leu) + L-leucine + ATP = L-leucyl-tRNA(Leu) + AMP + diphosphate. The polypeptide is Leucine--tRNA ligase (Pseudothermotoga lettingae (strain ATCC BAA-301 / DSM 14385 / NBRC 107922 / TMO) (Thermotoga lettingae)).